We begin with the raw amino-acid sequence, 530 residues long: Probable NADH-specific resorcinol 4-hydroxylase (530 aa).

The enzyme catalyses resorcinol + NADH + O2 + H(+) = benzene-1,2,4-triol + NAD(+) + H2O. Functionally, single-component hydroxylase that is part of the gamma-resorcylate (GRA) degradation pathway. GRA is initially converted by GRA decarboxylase to resorcinol, which is hydroxylated by resorcinol 4-hydroxylase. In Rhodococcus jostii (strain RHA1), this protein is Probable NADH-specific resorcinol 4-hydroxylase (tsdB).